Consider the following 391-residue polypeptide: Pectin acetylesterase 11 (391 aa).

Positions 1-23 (MTWLKQMWSSILVLAVVVIGARA) are cleaved as a signal peptide. Active-site charge relay system residues include S171, D267, and H334.

It belongs to the pectinacetylesterase family.

The protein localises to the secreted. It localises to the cell wall. Its function is as follows. Hydrolyzes acetyl esters in homogalacturonan regions of pectin. In type I primary cell wall, galacturonic acid residues of pectin can be acetylated at the O-2 and O-3 positions. Decreasing the degree of acetylation of pectin gels in vitro alters their physical properties. The protein is Pectin acetylesterase 11 of Arabidopsis thaliana (Mouse-ear cress).